The chain runs to 248 residues: tRNA pseudouridine synthase A 2 (248 aa).

Catalysis depends on D55, which acts as the Nucleophile. Y113 serves as a coordination point for substrate.

Belongs to the tRNA pseudouridine synthase TruA family. In terms of assembly, homodimer.

It carries out the reaction uridine(38/39/40) in tRNA = pseudouridine(38/39/40) in tRNA. In terms of biological role, formation of pseudouridine at positions 38, 39 and 40 in the anticodon stem and loop of transfer RNAs. This is tRNA pseudouridine synthase A 2 from Clostridium tetani (strain Massachusetts / E88).